The sequence spans 706 residues: Complement C1r-B subcomponent (706 aa).

Residues 1 to 16 (MWLFALLVTLFYGVEG) form the signal peptide. The 124-residue stretch at 17 to 140 (SIYLPQKLYG…KGFLAYYQAV (124 aa)) folds into the CUB 1 domain. The Ca(2+) site is built by glutamate 65, aspartate 73, and aspartate 118. A disulfide bond links cysteine 70 and cysteine 88. Asparagine 124 carries N-linked (GlcNAc...) asparagine glycosylation. Ca(2+) is bound by residues aspartate 141, leucine 142, and glutamate 144. The EGF-like; calcium-binding domain occupies 141–189 (DLDECASQPNSVEEGLQPRCQHLCHNYVGGYFCSCHPGYELQKDGQSCQ). Cystine bridges form between cysteine 145/cysteine 164, cysteine 160/cysteine 173, cysteine 175/cysteine 188, and cysteine 192/cysteine 219. Ca(2+) contacts are provided by asparagine 166, tyrosine 167, and glycine 170. At asparagine 166 the chain carries (3R)-3-hydroxyasparagine. The region spanning 192–304 (CSSELYTEPS…RGWKLHYTTE (113 aa)) is the CUB 2 domain. Serine 205 bears the Phosphoserine; by CK2 mark. Residue asparagine 220 is glycosylated (N-linked (GlcNAc...) asparagine). Ca(2+) is bound by residues aspartate 242, aspartate 252, aspartate 289, and aspartate 293. Cysteine 249 and cysteine 267 are oxidised to a cystine. 2 Sushi domains span residues 306-372 (IKCP…RCKI) and 373-448 (KNCG…RCLP). 5 disulfide bridges follow: cysteine 308-cysteine 357, cysteine 337-cysteine 370, cysteine 375-cysteine 428, cysteine 405-cysteine 446, and cysteine 450-cysteine 578. In terms of domain architecture, Peptidase S1 spans 463-703 (IIGGQPARPG…YVDWIKKEMG (241 aa)). Residues histidine 501 and aspartate 558 each act as charge relay system in the active site. A glycan (N-linked (GlcNAc...) asparagine) is linked at asparagine 582. 2 disulfide bridges follow: cysteine 621-cysteine 640 and cysteine 651-cysteine 681. Catalysis depends on serine 655, which acts as the Charge relay system.

It belongs to the peptidase S1 family. Core component of the complement C1 complex, a calcium-dependent complex composed of 1 molecule of the C1Q subcomplex, 2 molecules of C1R and 2 molecules of C1S. The C1Q subcomplex is composed 18 subunits: 3 chains of C1QA, C1QB, and C1QC trimerize to form 6 collagen-like triple helices connected to six globular ligand-recognition modules. Within the C1 complex, C1R is a dimer of identical chains, each of which is activated by cleavage into two chains, heavy and light, connected by disulfide bonds. In terms of processing, cleaved and activated by autocatalytic processing to generate Complement C1r subcomponent heavy and light chains that are connected by disulfide bonds. The iron and 2-oxoglutarate dependent 3-hydroxylation of aspartate and asparagine is (R) stereospecific within EGF domains.

The protein localises to the secreted. It localises to the cell surface. The enzyme catalyses Selective cleavage of Lys(or Arg)-|-Ile bond in complement subcomponent C1s to form the active form of C1s (EC 3.4.21.42).. Its activity is regulated as follows. Activated by the C1Q subcomplex of the C1 complex following C1Q binding to immunoglobulins (IgG or IgM) complexed with antigens to form antigen-antibody complexes on the surface of pathogens. Immunoglobulin-binding promotes autoactivation of C1R, which results in the cleavage of the Arg-Ile bond in the catalytic domain. Functionally, serine protease component of the complement C1 complex, a multiprotein complex that initiates the classical pathway of the complement system, a cascade of proteins that leads to phagocytosis and breakdown of pathogens and signaling that strengthens the adaptive immune system. C1R catalyzes the first enzymatic step in the classical complement pathway: it is activated by the C1Q subcomplex of the C1 complex, which associates with IgG or IgM immunoglobulins complexed with antigens to form antigen-antibody complexes on the surface of pathogens. Immunoglobulin-binding promotes the autocatalytic cleavage and activation of C1R. Activated C1R then cleaves and activates C1S, the second protease of the classical complement pathway. It is unclear if C1R activates C1S within single, strained C1 complexes or between neighboring C1 complexes on surfaces. This Mus musculus (Mouse) protein is Complement C1r-B subcomponent (C1rb).